The chain runs to 312 residues: uncharacterized protein (312 aa).

8 consecutive transmembrane segments (helical) span residues 4-24 (IFLAGLAAGFQTTWTLGKVIF), 45-65 (LITPVMGLFGLSGEAAIPLVL), 75-95 (IAGILTLDLSVKEVFILAVML), 117-137 (VILAVRIGLAAVSAIVINLIW), 171-191 (GLGVLQLAAIVIPLMIIIQFL), 217-237 (TSMTMVTGLTIGLAYGAGVMI), 253-275 (AFIFLVACHAVVEDTLVFIPLGI), and 280-299 (LLLIRVTTAVLLTMAIAHTW).

The protein resides in the cell membrane. This is an uncharacterized protein from Bacillus subtilis (strain 168).